A 235-amino-acid chain; its full sequence is Sugar fermentation stimulation protein homolog (235 aa).

It belongs to the SfsA family.

This Pseudomonas aeruginosa (strain ATCC 15692 / DSM 22644 / CIP 104116 / JCM 14847 / LMG 12228 / 1C / PRS 101 / PAO1) protein is Sugar fermentation stimulation protein homolog.